A 316-amino-acid polypeptide reads, in one-letter code: ATP synthase gamma chain (316 aa).

Belongs to the ATPase gamma chain family. F-type ATPases have 2 components, CF(1) - the catalytic core - and CF(0) - the membrane proton channel. CF(1) has five subunits: alpha(3), beta(3), gamma(1), delta(1), epsilon(1). CF(0) has three main subunits: a, b and c.

It is found in the cellular thylakoid membrane. Produces ATP from ADP in the presence of a proton gradient across the membrane. The gamma chain is believed to be important in regulating ATPase activity and the flow of protons through the CF(0) complex. This chain is ATP synthase gamma chain, found in Prochlorococcus marinus subsp. pastoris (strain CCMP1986 / NIES-2087 / MED4).